Here is a 390-residue protein sequence, read N- to C-terminus: Transforming growth factor beta-1 proprotein (390 aa).

Residues 1–29 (MPPSGLRLLPLLLPLLWLLVLTPGRPAAG) form the signal peptide. The interval 30 to 74 (LSTCKTIDMELVKRKRIEAIRGQILSKLRLASPPSQGEVPPGPLP) is straightjacket domain. The interval 75–271 (EAVLALYNST…ATPLERAQQL (197 aa)) is arm domain. Asn82, Asn136, and Asn176 each carry an N-linked (GlcNAc...) asparagine glycan. A bowtie tail region spans residues 226 to 252 (DSKDNTLRVGINGFSSSRRGDLATIDG). Positions 244–246 (RGD) match the Cell attachment site motif. 4 disulfide bridges follow: Cys285–Cys294, Cys293–Cys356, Cys322–Cys387, and Cys326–Cys389.

Belongs to the TGF-beta family. Homodimer; disulfide-linked. Interacts with the serine proteases, HTRA1 and HTRA3: the interaction with either inhibits TGFB1-mediated signaling and the HTRA protease activity is required for this inhibition. May interact with THSD4; this interaction may lead to sequestration by FBN1 microfibril assembly and attenuation of TGFB signaling. Interacts with CD109, DPT and ASPN. Interacts with EFEMP2. Interacts with TSKU; the interaction contributes to regulation of the hair cycle. Interacts with TGFBR3. As to quaternary structure, homodimer; disulfide-linked. Interacts with transforming growth factor beta-1 (TGF-beta-1) chain; interaction is non-covalent and maintains TGF-beta-1 in a latent state; each latency-associated peptide (LAP) monomer interacts with TGF-beta-1 in the other monomer. Interacts with LTBP1; leading to regulation of TGF-beta-1 activation. Interacts with LRRC32/GARP; leading to regulation of TGF-beta-1 activation on the surface of activated regulatory T-cells (Tregs). Interacts with LRRC33/NRROS; leading to regulation of TGF-beta-1 activation in macrophages and microglia. Interacts (via cell attachment site) with integrins ITGAV and ITGB6 (ITGAV:ITGB6), leading to release of the active TGF-beta-1. Latency-associated peptide: Interacts with NREP; the interaction results in a decrease in TGFB1 autoinduction. Interacts with HSP90AB1; inhibits latent TGFB1 activation. In terms of assembly, homodimer; disulfide-linked. Interacts with TGF-beta receptors (TGFBR1 and TGFBR2), leading to signal transduction. Post-translationally, transforming growth factor beta-1 proprotein: The precursor proprotein is cleaved in the Golgi apparatus by FURIN to form Transforming growth factor beta-1 (TGF-beta-1) and Latency-associated peptide (LAP) chains, which remain non-covalently linked, rendering TGF-beta-1 inactive. N-glycosylated. Deglycosylation leads to activation of Transforming growth factor beta-1 (TGF-beta-1); mechanisms triggering deglycosylation-driven activation of TGF-beta-1 are however unclear.

It localises to the secreted. Its subcellular location is the extracellular space. The protein localises to the extracellular matrix. Its function is as follows. Transforming growth factor beta-1 proprotein: Precursor of the Latency-associated peptide (LAP) and Transforming growth factor beta-1 (TGF-beta-1) chains, which constitute the regulatory and active subunit of TGF-beta-1, respectively. Functionally, required to maintain the Transforming growth factor beta-1 (TGF-beta-1) chain in a latent state during storage in extracellular matrix. Associates non-covalently with TGF-beta-1 and regulates its activation via interaction with 'milieu molecules', such as LTBP1, LRRC32/GARP and LRRC33/NRROS, that control activation of TGF-beta-1. Interaction with LRRC33/NRROS regulates activation of TGF-beta-1 in macrophages and microglia. Interaction with LRRC32/GARP controls activation of TGF-beta-1 on the surface of activated regulatory T-cells (Tregs). Interaction with integrins (ITGAV:ITGB6 or ITGAV:ITGB8) results in distortion of the Latency-associated peptide chain and subsequent release of the active TGF-beta-1. Multifunctional protein that regulates the growth and differentiation of various cell types and is involved in various processes, such as normal development, immune function, microglia function and responses to neurodegeneration. Activation into mature form follows different steps: following cleavage of the proprotein in the Golgi apparatus, Latency-associated peptide (LAP) and Transforming growth factor beta-1 (TGF-beta-1) chains remain non-covalently linked rendering TGF-beta-1 inactive during storage in extracellular matrix. At the same time, LAP chain interacts with 'milieu molecules', such as LTBP1, LRRC32/GARP and LRRC33/NRROS that control activation of TGF-beta-1 and maintain it in a latent state during storage in extracellular milieus. TGF-beta-1 is released from LAP by integrins (ITGAV:ITGB6 or ITGAV:ITGB8): integrin-binding to LAP stabilizes an alternative conformation of the LAP bowtie tail and results in distortion of the LAP chain and subsequent release of the active TGF-beta-1. Once activated following release of LAP, TGF-beta-1 acts by binding to TGF-beta receptors (TGFBR1 and TGFBR2), which transduce signal. While expressed by many cells types, TGF-beta-1 only has a very localized range of action within cell environment thanks to fine regulation of its activation by Latency-associated peptide chain (LAP) and 'milieu molecules'. Plays an important role in bone remodeling: acts as a potent stimulator of osteoblastic bone formation, causing chemotaxis, proliferation and differentiation in committed osteoblasts. Can promote either T-helper 17 cells (Th17) or regulatory T-cells (Treg) lineage differentiation in a concentration-dependent manner. At high concentrations, leads to FOXP3-mediated suppression of RORC and down-regulation of IL-17 expression, favoring Treg cell development. At low concentrations in concert with IL-6 and IL-21, leads to expression of the IL-17 and IL-23 receptors, favoring differentiation to Th17 cells. Stimulates sustained production of collagen through the activation of CREB3L1 by regulated intramembrane proteolysis (RIP). Mediates SMAD2/3 activation by inducing its phosphorylation and subsequent translocation to the nucleus. Positively regulates odontoblastic differentiation in dental papilla cells, via promotion of IPO7-mediated translocation of phosphorylated SMAD2 to the nucleus and subsequent transcription of target genes. Can induce epithelial-to-mesenchymal transition (EMT) and cell migration in various cell types. This chain is Transforming growth factor beta-1 proprotein (TGFB1), found in Equus caballus (Horse).